The following is a 686-amino-acid chain: X-linked interleukin-1 receptor accessory protein-like 2 (686 aa).

The signal sequence occupies residues M1–S16. Residues T17–K354 are Extracellular-facing. Residues N18–T132 form the Ig-like C2-type 1 domain. A disulfide bond links C53 and C116. N-linked (GlcNAc...) asparagine glycosylation is found at N63, N120, N136, N211, and N328. Ig-like C2-type domains follow at residues C141–T232 and P239–R347. 2 cysteine pairs are disulfide-bonded: C162/C214 and C265/C331. A helical membrane pass occupies residues I355–Y375. The Cytoplasmic portion of the chain corresponds to K376 to W686. Residues K400–M556 form the TIR domain. E488 is an active-site residue.

It belongs to the interleukin-1 receptor family. In terms of tissue distribution, detected at low levels in fetal and adult brain, in particular in the frontal lobe, temporal lobe and cerebellum. Detected at very low levels in skin, liver, fetal ovary and in placenta.

Its subcellular location is the membrane. The catalysed reaction is NAD(+) + H2O = ADP-D-ribose + nicotinamide + H(+). In Homo sapiens (Human), this protein is X-linked interleukin-1 receptor accessory protein-like 2 (IL1RAPL2).